Consider the following 506-residue polypeptide: GTPase Der (506 aa).

2 consecutive EngA-type G domains span residues 3–166 and 218–391; these read PVVA…GEQL and IKIA…ACAT. GTP contacts are provided by residues 9 to 16, 56 to 60, 118 to 121, 224 to 231, 271 to 275, and 336 to 339; these read GRPNVGKS, DTGGI, NKTD, DTAGV, and NKWD. Positions 392–476 constitute a KH-like domain; that stretch reads QKTSTSMLTR…PIRIQFQEGN (85 aa).

This sequence belongs to the TRAFAC class TrmE-Era-EngA-EngB-Septin-like GTPase superfamily. EngA (Der) GTPase family. In terms of assembly, associates with the 50S ribosomal subunit.

GTPase that plays an essential role in the late steps of ribosome biogenesis. The chain is GTPase Der from Actinobacillus pleuropneumoniae serotype 5b (strain L20).